A 404-amino-acid polypeptide reads, in one-letter code: Tryptophan synthase beta chain (404 aa).

Residue Lys98 is modified to N6-(pyridoxal phosphate)lysine.

This sequence belongs to the TrpB family. In terms of assembly, tetramer of two alpha and two beta chains. Pyridoxal 5'-phosphate serves as cofactor.

The catalysed reaction is (1S,2R)-1-C-(indol-3-yl)glycerol 3-phosphate + L-serine = D-glyceraldehyde 3-phosphate + L-tryptophan + H2O. The protein operates within amino-acid biosynthesis; L-tryptophan biosynthesis; L-tryptophan from chorismate: step 5/5. In terms of biological role, the beta subunit is responsible for the synthesis of L-tryptophan from indole and L-serine. The polypeptide is Tryptophan synthase beta chain (Rhodopseudomonas palustris (strain BisB5)).